A 381-amino-acid polypeptide reads, in one-letter code: Chitin deacetylase 8 (381 aa).

The first 18 residues, 1–18 (MKRLSVLCSLLLVAAALG), serve as a signal peptide directing secretion. 2 disulfides stabilise this stretch: Cys27/Cys39 and Cys32/Cys37. Zn(2+)-binding residues include Asp63, His117, and His121. 5 disulfide bridges follow: Cys86-Cys335, Cys211-Cys216, Cys240-Cys246, Cys343-Cys365, and Cys348-Cys368. N-linked (GlcNAc...) asparagine glycosylation is present at Asn171.

It belongs to the carbohydrate esterase 4 (CE4) family. Zn(2+) serves as cofactor. In terms of tissue distribution, strongly expressed in the midgut. Has little or no expression in other tissues tested.

It is found in the secreted. It catalyses the reaction [(1-&gt;4)-N-acetyl-beta-D-glucosaminyl](n) + n H2O = chitosan + n acetate. In terms of biological role, hydrolyzes the N-acetamido groups of N-acetyl-D-glucosamine (GlcNAc) residues in chitin. Shows activity towards the chitinous oligomers GlcNAc(3), GlcNAc(4), GlcNAc(5) and GlcNAc(6), but not GlcNAc or GlcNAc(2). Requires the substrate to occupy subsites 0, +1, and +2 for optimum catalysis. This is Chitin deacetylase 8 from Bombyx mori (Silk moth).